The sequence spans 59 residues: Large ribosomal subunit protein uL30 (59 aa).

The protein belongs to the universal ribosomal protein uL30 family. As to quaternary structure, part of the 50S ribosomal subunit.

In Ruminiclostridium cellulolyticum (strain ATCC 35319 / DSM 5812 / JCM 6584 / H10) (Clostridium cellulolyticum), this protein is Large ribosomal subunit protein uL30.